The chain runs to 834 residues: 5-hydroxytryptamine receptor 2A (834 aa).

At 1–230 the chain is on the extracellular side; that stretch reads MAHETSFNDA…TQLLRMAVTS (230 aa). Residues 56 to 75 are disordered; it reads TDDGQLEDTNNNNNSKRYYS. Residues N68, N97, N161, N175, N183, N194, N203, and N209 are each glycosylated (N-linked (GlcNAc...) asparagine). Residues 231 to 253 traverse the membrane as a helical segment; the sequence is VLLGLMILVTIIGNVFVIAAIIL. Over 254 to 263 the chain is Cytoplasmic; sequence ERNLQNVANY. Residues 264-285 traverse the membrane as a helical segment; that stretch reads LVASLAVADLFVACLVMPLGAV. The Extracellular portion of the chain corresponds to 286 to 300; that stretch reads YEISQGWILGPELCD. C299 and C378 are oxidised to a cystine. Residues 301–322 traverse the membrane as a helical segment; the sequence is IWTSCDVLCCTASILHLVAIAV. Topologically, residues 323-341 are cytoplasmic; it reads DRYWAVTNIDYIHSRTSNR. Residues 342-364 traverse the membrane as a helical segment; sequence VFMMIFCVWTAAVIVSLAPQFGW. At 365–391 the chain is on the extracellular side; it reads KDPDYLQRIEQQKCMVSQDVSYQVFAT. The helical transmembrane segment at 392–413 threads the bilayer; it reads CCTFYVPLLVILALYWKIYQTA. Topologically, residues 414 to 752 are cytoplasmic; that stretch reads RKRIHRRRPR…AKRERKAAKT (339 aa). Disordered regions lie at residues 420–442, 460–516, 531–599, 617–640, and 674–743; these read RRPR…ATDT, KTGS…STSG, QQGK…SEDQ, LEQV…TSNA, and STLT…TLEA. Composition is skewed to polar residues over residues 482–502 and 532–542; these read GNST…SNVD and QGKSTAKSSAA. The segment covering 551-564 has biased composition (basic and acidic residues); that stretch reads RQEDDGQRPEHGEQ. Over residues 565–575 the composition is skewed to acidic residues; the sequence is EDREELEDQDE. The span at 582 to 593 shows a compositional bias: low complexity; that stretch reads TTATSATTAAGT. Polar residues predominate over residues 674–694; it reads STLTSCNQSHPLCGTANESPS. Residues 702–723 show a composition bias toward low complexity; it reads QPTTPQQQPHQQAHQQQQQQQQ. The chain crosses the membrane as a helical span at residues 753-776; the sequence is LAIITGAFVVCWLPFFVMALTMPL. Residues 777 to 785 lie on the Extracellular side of the membrane; sequence CAACQISDS. Residues 786–808 traverse the membrane as a helical segment; that stretch reads VASLFLWLGYFNSTLNPVIYTIF. Residues 809–834 are Cytoplasmic-facing; the sequence is SPEFRQAFKRILFGGHRPVHYRSGKL.

Belongs to the G-protein coupled receptor 1 family.

It is found in the cell membrane. Functionally, this is one of the several different receptors for 5-hydroxytryptamine (serotonin), a biogenic hormone that functions as a neurotransmitter, a hormone, and a mitogen. The activity of this receptor is mediated by G proteins which inhibit adenylate cyclase. The sequence is that of 5-hydroxytryptamine receptor 2A (5-HT1A) from Drosophila melanogaster (Fruit fly).